A 549-amino-acid chain; its full sequence is Nectin-3 (549 aa).

Positions 1-57 (MARTPGPAPLCPGGGKAQLSSAFPPAAGLLLPAPTPPPLLLLLIPLLLFSRLCGALA) are cleaved as a signal peptide. One can recognise an Ig-like V-type domain in the interval 58 to 165 (GSIIVEPHVT…GNAQSSTTVT (108 aa)). Residues 58–404 (GSIIVEPHVT…ATLKDDTIGT (347 aa)) lie on the Extracellular side of the membrane. Residues asparagine 73, asparagine 83, asparagine 125, asparagine 186, asparagine 222, and asparagine 331 are each glycosylated (N-linked (GlcNAc...) asparagine). Cysteines 78 and 148 form a disulfide. Ig-like C2-type domains are found at residues 170-258 (PTVS…KDIR) and 269-354 (PEVS…KVIY). Disulfide bonds link cysteine 193–cysteine 246 and cysteine 291–cysteine 338. A helical membrane pass occupies residues 405–425 (IIASVVGGALFLVLVSILAGV). The Cytoplasmic segment spans residues 426–549 (FCYRRRRTFR…SVISRREWYV (124 aa)).

The protein belongs to the nectin family. As to quaternary structure, cis- and trans-homodimer. Can form trans-heterodimers with NECTIN1, NECTIN2, PVR, IGSF4B/Necl-1 and with IGSF4. Interaction between NECTIN1 and NECTIN3 on the pre- and postsynaptic sites, respectively, initiates the formation of puncta adherentia junctions between axons and dendrites. Interacts (via Cytoplasmic domain) with AFDN, providing a connection with the actin cytoskeleton. Binds with low affinity to TIGIT. As to expression, ubiquitous with high expression in testes. Localized in spermatids at Sertoli-spermatid junctions. Expressed in ovarian granulosa cells, but only faintly expressed after ovulation.

Its subcellular location is the cell membrane. It localises to the postsynaptic cell membrane. The protein resides in the cell junction. It is found in the adherens junction. In terms of biological role, cell adhesion molecule that promotes cell-cell adhesion through heterophilic trans-interactions with nectins-like or other nectins, such as trans-interaction with NECTIN2 at Sertoli-spermatid junctions. Trans-interaction with PVR induces activation of CDC42 and RAC small G proteins through common signaling molecules such as SRC and RAP1. Induces endocytosis-mediated down-regulation of PVR from the cell surface, resulting in reduction of cell movement and proliferation. Involved in axon guidance by promoting contacts between the commissural axons and the floor plate cells. Also involved in the formation of cell-cell junctions, including adherens junctions and synapses. Promotes formation of checkerboard-like cellular pattern of hair cells and supporting cells in the auditory epithelium via heterophilic interaction with NECTIN1: NECTIN1 is present in the membrane of hair cells and associates with NECTIN3 on supporting cells, thereby mediating heterotypic adhesion between these two cell types. Plays a role in the morphology of the ciliary body. This Mus musculus (Mouse) protein is Nectin-3.